A 366-amino-acid polypeptide reads, in one-letter code: MKIGVFIPIGNNGWLISSNAPQYQPTFELNKTIVQKAEHYNFDFALSMIKLRGFGGKTEFWDHNLESFTLMAGLAAVTSRIKIYATAATLTMPPAIVARMASTIDSISNGRFGLNVVTGWQKPEYEQMGMWPGDDYFGRRYDYLAEYVNVLRDLWGTGKSDFKGEFFQMDDCRVSPQPQADIKVICAGQSDAGMAFSAKYADYNFCFGKGVNTPTAFAPTAARLKIAADSEGRSVACYVLFMIIADETDEAARAKWESYKAGADTEALAWLTEQSGKDTKSGADTNVRQMADPTSAVNINMGTLVGSYANVARMMDEIATVPGTEGVLLTFDDFITGVENFGERIQPLMKSRADVCPQTAASREVA.

Residues 49-50 (IK), Asn115, Glu124, 140-141 (RY), and Ser190 contribute to the FMN site.

The protein belongs to the NtaA/SnaA/DszA monooxygenase family. RutA subfamily.

It catalyses the reaction uracil + FMNH2 + NADH + O2 = (Z)-3-ureidoacrylate + FMN + NAD(+) + H2O + H(+). It carries out the reaction thymine + FMNH2 + NADH + O2 = (Z)-2-methylureidoacrylate + FMN + NAD(+) + H2O + H(+). Its function is as follows. Catalyzes the pyrimidine ring opening between N-3 and C-4 by an unusual flavin hydroperoxide-catalyzed mechanism, adding oxygen atoms in the process to yield ureidoacrylate peracid, that immediately reacts with FMN forming ureidoacrylate and FMN-N(5)-oxide. The FMN-N(5)-oxide reacts spontaneously with NADH to produce FMN. Requires the flavin reductase RutF to regenerate FMN in vivo. The chain is Pyrimidine monooxygenase RutA from Serratia proteamaculans (strain 568).